The chain runs to 234 residues: tRNA (guanine-N(1)-)-methyltransferase (234 aa).

S-adenosyl-L-methionine-binding positions include glycine 115 and 135 to 140 (VGDYIL).

Belongs to the RNA methyltransferase TrmD family. As to quaternary structure, homodimer.

It is found in the cytoplasm. It carries out the reaction guanosine(37) in tRNA + S-adenosyl-L-methionine = N(1)-methylguanosine(37) in tRNA + S-adenosyl-L-homocysteine + H(+). Specifically methylates guanosine-37 in various tRNAs. In Rickettsia peacockii (strain Rustic), this protein is tRNA (guanine-N(1)-)-methyltransferase.